A 297-amino-acid polypeptide reads, in one-letter code: HTH-type transcriptional regulator ArgP (297 aa).

The HTH lysR-type domain occupies 4-60 (PDYRTLQALDAVIRERGFERAAQKLCITQSAVSQRIKQLENMFGQPLLVRTVPPRPT). Residues 21-40 (FERAAQKLCITQSAVSQRIK) constitute a DNA-binding region (H-T-H motif).

This sequence belongs to the LysR transcriptional regulatory family. In terms of assembly, homodimer.

Its function is as follows. Controls the transcription of genes involved in arginine and lysine metabolism. This is HTH-type transcriptional regulator ArgP from Enterobacter sp. (strain 638).